Consider the following 904-residue polypeptide: Myelin regulatory factor-like protein (904 aa).

Residues 46–132 (LQRQLPDTPP…ATCRHQTGPS (87 aa)) form a disordered region. The segment covering 100–117 (PSQSMAGQTHSSFQNGYP) has biased composition (polar residues). Positions 108-400 (THSSFQNGYP…SNPGQFENDS (293 aa)) form a DNA-binding region, NDT80. The Peptidase S74 domain maps to 446-554 (SDSRVKENIQ…KLTNNLEERI (109 aa)). Residues 538–575 (GAVKQLCKLTNNLEERIEELEIWNKKLARLKRLSSSWK) are a coiled coil. Residues 624-644 (LVVVLIAVMAFCALTIVALYI) form a helical membrane-spanning segment. The disordered stretch occupies residues 656–688 (NLPLSNMTSSPEPALSSTAPTSAPHTTPETTQT). Over residues 663–688 (TSSPEPALSSTAPTSAPHTTPETTQT) the composition is skewed to low complexity.

This sequence belongs to the MRF family.

Its subcellular location is the membrane. The protein is Myelin regulatory factor-like protein (Myrfl) of Mus musculus (Mouse).